Reading from the N-terminus, the 247-residue chain is UDP-N-acetyl-D-mannosaminuronic acid transferase (247 aa).

It belongs to the glycosyltransferase 26 family.

The catalysed reaction is UDP-N-acetyl-alpha-D-mannosaminouronate + N-acetyl-alpha-D-glucosaminyl-di-trans,octa-cis-undecaprenyl diphosphate = beta-D-ManNAcA-(1-&gt;4)-alpha-D-GlcNAc-di-trans,octa-cis-undecaprenyl diphosphate + UDP + H(+). Its pathway is bacterial outer membrane biogenesis; enterobacterial common antigen biosynthesis. In terms of biological role, catalyzes the synthesis of Und-PP-GlcNAc-ManNAcA (Lipid II), the second lipid-linked intermediate involved in enterobacterial common antigen (ECA) synthesis. The protein is UDP-N-acetyl-D-mannosaminuronic acid transferase of Enterobacter sp. (strain 638).